A 425-amino-acid chain; its full sequence is Histidine--tRNA ligase (425 aa).

It belongs to the class-II aminoacyl-tRNA synthetase family. As to quaternary structure, homodimer.

The protein localises to the cytoplasm. It carries out the reaction tRNA(His) + L-histidine + ATP = L-histidyl-tRNA(His) + AMP + diphosphate + H(+). The protein is Histidine--tRNA ligase of Aeromonas hydrophila subsp. hydrophila (strain ATCC 7966 / DSM 30187 / BCRC 13018 / CCUG 14551 / JCM 1027 / KCTC 2358 / NCIMB 9240 / NCTC 8049).